We begin with the raw amino-acid sequence, 629 residues long: Flap endonuclease GEN-like 1 (629 aa).

An N-domain region spans residues 1–87 (MGVGGSFWDL…DGQPSPLKSQ (87 aa)). Residues 2–98 (GVGGSFWDLL…RAARFFRGSG (97 aa)) are XPG-N domain. Asp-31, Asp-78, Glu-148, Glu-150, Asp-169, Asp-171, and Asp-221 together coordinate Mg(2+). An XPG-I domain region spans residues 136–221 (EYLGMPVLRA…VAMALLVGSD (86 aa)). Positions 136–225 (EYLGMPVLRA…LLVGSDHDLH (90 aa)) are I-domain. Residues 221–421 (DHDLHGVPGF…MLPMLSTIYL (201 aa)) are 5'-3' exonuclease domain. Residues 594–617 (KKGLSGDSGKDGSRKSSDVDLSKN) form a disordered region. Over residues 601–614 (SGKDGSRKSSDVDL) the composition is skewed to basic and acidic residues.

The protein belongs to the XPG/RAD2 endonuclease family. GEN subfamily. As to quaternary structure, monomer. Interacts with PCNA. PCNA stimulates the nuclease activity without altering cleavage specificity. Mg(2+) is required as a cofactor. Highly expressed in anthers. Expressed in roots and leaves.

Its subcellular location is the nucleus. Endonuclease which cleaves flap structures at the junction between single-stranded DNA and double-stranded DNA. Possesses both single-stranded and double-stranded DNA-binding activities. Involved in early microspore development, but does not alter meiosis or tapetal cells development. Possesses Holliday junction (HJ) resolvase activity in vitro. Cleaves HJ at symmetrically related sites of the branch point. The sequence is that of Flap endonuclease GEN-like 1 from Oryza sativa subsp. japonica (Rice).